Here is a 105-residue protein sequence, read N- to C-terminus: N(4)-acetylcytidine amidohydrolase (105 aa).

Residues 7-93 (TFFERFEHDI…VIAEIYPGLE (87 aa)) enclose the ASCH domain. The Proton acceptor role is filled by lysine 21. The active-site Nucleophile is the threonine 24. Residue glutamate 74 is the Proton donor of the active site.

It belongs to the N(4)-acetylcytidine amidohydrolase family.

The enzyme catalyses N(4)-acetylcytidine + H2O = cytidine + acetate + H(+). It catalyses the reaction N(4)-acetyl-2'-deoxycytidine + H2O = 2'-deoxycytidine + acetate + H(+). It carries out the reaction N(4)-acetylcytosine + H2O = cytosine + acetate + H(+). Functionally, catalyzes the hydrolysis of N(4)-acetylcytidine (ac4C). This Shewanella baltica (strain OS195) protein is N(4)-acetylcytidine amidohydrolase.